The chain runs to 298 residues: GTP-binding protein REM 1 (298 aa).

Residues 1 to 73 form a disordered region; sequence MTLNTEQEAK…DDWSSESSDS (73 aa). Positions 35–55 are enriched in polar residues; it reads TVPSTQSQHPRLGQSASLNPP. Residue S51 is modified to Phosphoserine. Residues 63–73 are compositionally biased toward low complexity; it reads PDDWSSESSDS. Residues 87-94 and 195-198 contribute to the GTP site; these read GDPGVGKT and NKAD. The interval 268–287 is calmodulin-binding; the sequence is ARRFLARLTARSARRRALKA.

This sequence belongs to the small GTPase superfamily. RGK family. In vitro, interacts with calmodulin in a calcium-dependent manner. Most highly expressed in the endothelial lining of the blood vessels in uterus and heart. Lower levels found in spleen, lymph node, kidney and testis. Also found in cells with secretory function such as the islets of Langerhans, lobule/duct epithelium in the breast, bile duct epithelium in the liver, surface epithelium in the endometrial glands of the uterus, colon mucosa and acinar cells in the pancreas and the prostate.

Functionally, promotes endothelial cell sprouting and actin cytoskeletal reorganization. May be involved in angiogenesis. May function in Ca(2+) signaling. This chain is GTP-binding protein REM 1 (REM1), found in Homo sapiens (Human).